A 474-amino-acid polypeptide reads, in one-letter code: 2-succinylbenzoate--CoA ligase (474 aa).

It belongs to the ATP-dependent AMP-binding enzyme family. MenE subfamily.

The catalysed reaction is 2-succinylbenzoate + ATP + CoA = 2-succinylbenzoyl-CoA + AMP + diphosphate. The protein operates within quinol/quinone metabolism; 1,4-dihydroxy-2-naphthoate biosynthesis; 1,4-dihydroxy-2-naphthoate from chorismate: step 5/7. It functions in the pathway quinol/quinone metabolism; menaquinone biosynthesis. Converts 2-succinylbenzoate (OSB) to 2-succinylbenzoyl-CoA (OSB-CoA). The sequence is that of 2-succinylbenzoate--CoA ligase from Staphylococcus epidermidis (strain ATCC 12228 / FDA PCI 1200).